A 427-amino-acid chain; its full sequence is Sperm-associated antigen 1A (427 aa).

A disordered region spans residues 46–113 (QKKGPGYREG…GPGSAGESCN (68 aa)). TPR repeat units lie at residues 125–158 (LARL…CIEA), 167–200 (CVLY…HPFS), 202–234 (KPLL…DISV), 302–335 (FTIL…KPNE), 336–369 (CAIY…EPKN), and 371–403 (KAFY…DPNV).

The protein resides in the cytoplasm. It is found in the dynein axonemal particle. Its function is as follows. May play a role in the cytoplasmic assembly and/or trafficking of the axonemal dynein arms. The protein is Sperm-associated antigen 1A (spag1a) of Danio rerio (Zebrafish).